The sequence spans 109 residues: Putative double-stranded DNA mimic protein plu2488 (109 aa).

It belongs to the putative dsDNA mimic protein family.

In terms of biological role, may act as a double-stranded DNA (dsDNA) mimic. Probably regulates the activity of a dsDNA-binding protein. This Photorhabdus laumondii subsp. laumondii (strain DSM 15139 / CIP 105565 / TT01) (Photorhabdus luminescens subsp. laumondii) protein is Putative double-stranded DNA mimic protein plu2488.